Consider the following 313-residue polypeptide: Ribosomal RNA small subunit methyltransferase H (313 aa).

S-adenosyl-L-methionine is bound by residues 35–37 (GGH), D55, F79, D101, and Q108.

Belongs to the methyltransferase superfamily. RsmH family.

The protein localises to the cytoplasm. The catalysed reaction is cytidine(1402) in 16S rRNA + S-adenosyl-L-methionine = N(4)-methylcytidine(1402) in 16S rRNA + S-adenosyl-L-homocysteine + H(+). In terms of biological role, specifically methylates the N4 position of cytidine in position 1402 (C1402) of 16S rRNA. This Escherichia coli O81 (strain ED1a) protein is Ribosomal RNA small subunit methyltransferase H.